A 357-amino-acid polypeptide reads, in one-letter code: Red-sensitive opsin (357 aa).

Residues 1–49 are Extracellular-facing; sequence MGDQWGDAVFAARRRGDDTTREAAFTYTNSNNTKDPFEGPNYHIAPRWV. A glycan (N-linked (GlcNAc...) asparagine) is linked at N31. A helical membrane pass occupies residues 50-74; sequence YNLATCWMFFVVVASTVTNGLVLVA. At 75–86 the chain is on the cytoplasmic side; it reads SAKFKKLRHPLN. The chain crosses the membrane as a helical span at residues 87 to 112; sequence WILVNLAIADLLETLLASTISVCNQF. Over 113-126 the chain is Extracellular; that stretch reads FGYFILGHPMCVFE. A disulfide bond links C123 and C200. Residues 127–146 form a helical membrane-spanning segment; the sequence is GFTVATCGIAGLWSLTVISW. The Cytoplasmic segment spans residues 147-165; the sequence is ERWVVVCKPFGNVKFDGKM. A helical transmembrane segment spans residues 166–189; that stretch reads ATAGIVFTWVWSAVWCAPPIFGWS. Topologically, residues 190 to 215 are extracellular; sequence RYWPHGLKTSCGPDVFSGSEDPGVQS. A helical transmembrane segment spans residues 216–243; that stretch reads YMIVLMITCCFIPLGIIILCYIAVWWAI. The Cytoplasmic portion of the chain corresponds to 244–265; that stretch reads RTVAQQQKDSESTQKAEKEVSR. A helical transmembrane segment spans residues 266–289; sequence MVVVMIMAYCFCWGPYTFFACFAA. The Extracellular segment spans residues 290–297; it reads ANPGYAFH. Residues 298–322 traverse the membrane as a helical segment; the sequence is PLAAAMPAYFAKSATIYNPVIYVFM. An N6-(retinylidene)lysine modification is found at K309. The Cytoplasmic segment spans residues 323–357; the sequence is NRQFRVCIMQLFGKKVDDGSEVSTSKTEVSSVAPA.

The protein belongs to the G-protein coupled receptor 1 family. Opsin subfamily. Post-translationally, phosphorylated on some or all of the serine and threonine residues present in the C-terminal region. In terms of tissue distribution, the color pigments are found in the cone photoreceptor cells.

Its subcellular location is the membrane. In terms of biological role, visual pigments are the light-absorbing molecules that mediate vision. They consist of an apoprotein, opsin, covalently linked to cis-retinal. This chain is Red-sensitive opsin (R007), found in Psalidodon fasciatus (Banded astyanax).